Reading from the N-terminus, the 249-residue chain is Triosephosphate isomerase (249 aa).

Residue 9 to 11 (NWK) coordinates substrate. His95 (electrophile) is an active-site residue. Residue Glu167 is the Proton acceptor of the active site. Substrate contacts are provided by residues Gly173, Ser213, and 234 to 235 (GG).

The protein belongs to the triosephosphate isomerase family. As to quaternary structure, homodimer.

Its subcellular location is the cytoplasm. The enzyme catalyses D-glyceraldehyde 3-phosphate = dihydroxyacetone phosphate. It functions in the pathway carbohydrate biosynthesis; gluconeogenesis. Its pathway is carbohydrate degradation; glycolysis; D-glyceraldehyde 3-phosphate from glycerone phosphate: step 1/1. Its function is as follows. Involved in the gluconeogenesis. Catalyzes stereospecifically the conversion of dihydroxyacetone phosphate (DHAP) to D-glyceraldehyde-3-phosphate (G3P). This chain is Triosephosphate isomerase, found in Dictyoglomus turgidum (strain DSM 6724 / Z-1310).